Here is a 134-residue protein sequence, read N- to C-terminus: Small ribosomal subunit protein uS12 (134 aa).

Aspartate 89 is modified (3-methylthioaspartic acid). The segment at 103 to 134 is disordered; sequence DTAGVKDRKQGRSKYGAKRPKPGEAAATGKKK. The segment covering 113 to 122 has biased composition (basic residues); sequence GRSKYGAKRP.

This sequence belongs to the universal ribosomal protein uS12 family. In terms of assembly, part of the 30S ribosomal subunit. Contacts proteins S8 and S17. May interact with IF1 in the 30S initiation complex.

In terms of biological role, with S4 and S5 plays an important role in translational accuracy. Interacts with and stabilizes bases of the 16S rRNA that are involved in tRNA selection in the A site and with the mRNA backbone. Located at the interface of the 30S and 50S subunits, it traverses the body of the 30S subunit contacting proteins on the other side and probably holding the rRNA structure together. The combined cluster of proteins S8, S12 and S17 appears to hold together the shoulder and platform of the 30S subunit. The sequence is that of Small ribosomal subunit protein uS12 from Thermosynechococcus vestitus (strain NIES-2133 / IAM M-273 / BP-1).